A 260-amino-acid chain; its full sequence is ATP synthase subunit a (260 aa).

7 helical membrane passes run 30-50 (IAFTNSALWMAITTAVLIVFV), 96-116 (LFAFILFANMLGLLPLALVGV), 125-145 (FTVTGVLAIMSFAIVLGVGFA), 151-171 (FFSLFVPHGTPVPMIPIIFPI), 187-207 (LFVAMMAGHVLLEVLSGFVIS), 213-233 (VGTFFLAAVPSFLLMIGICAL), and 234-254 (ELLVAGIQAYVFALLTCVYLN).

Belongs to the ATPase A chain family. F-type ATPases have 2 components, CF(1) - the catalytic core - and CF(0) - the membrane proton channel. CF(1) has five subunits: alpha(3), beta(3), gamma(1), delta(1), epsilon(1). CF(0) has three main subunits: a(1), b(2) and c(9-12). The alpha and beta chains form an alternating ring which encloses part of the gamma chain. CF(1) is attached to CF(0) by a central stalk formed by the gamma and epsilon chains, while a peripheral stalk is formed by the delta and b chains.

Its subcellular location is the cell inner membrane. Its function is as follows. Key component of the proton channel; it plays a direct role in the translocation of protons across the membrane. In Novosphingobium aromaticivorans (strain ATCC 700278 / DSM 12444 / CCUG 56034 / CIP 105152 / NBRC 16084 / F199), this protein is ATP synthase subunit a.